Here is a 572-residue protein sequence, read N- to C-terminus: Methionine--tRNA ligase (572 aa).

Residues 11–21 (PYINGIKHLGN) carry the 'HIGH' region motif. Zn(2+)-binding residues include C143, C146, C156, and C159. A 'KMSKS' region motif is present at residues 346-350 (QFSTS). An ATP-binding site is contributed by T349.

Belongs to the class-I aminoacyl-tRNA synthetase family. MetG type 1 subfamily. Monomer. Zn(2+) is required as a cofactor.

The protein localises to the cytoplasm. The catalysed reaction is tRNA(Met) + L-methionine + ATP = L-methionyl-tRNA(Met) + AMP + diphosphate. In terms of biological role, is required not only for elongation of protein synthesis but also for the initiation of all mRNA translation through initiator tRNA(fMet) aminoacylation. The chain is Methionine--tRNA ligase from Roseobacter denitrificans (strain ATCC 33942 / OCh 114) (Erythrobacter sp. (strain OCh 114)).